The primary structure comprises 103 residues: Somatoliberin (103 aa).

The signal sequence occupies residues 1 to 19 (MLLWVLFVILILTSGSHCS). 2 propeptides span residues 20 to 30 (LPPSPPFRMQR) and 74 to 103 (QEDS…SADA).

Belongs to the glucagon family.

The protein resides in the secreted. GRF is released by the hypothalamus and acts on the adenohypophyse to stimulate the secretion of growth hormone. In Mus musculus (Mouse), this protein is Somatoliberin (Ghrh).